Here is a 146-residue protein sequence, read N- to C-terminus: Ferredoxin-type protein FwdE (146 aa).

2 consecutive 4Fe-4S ferredoxin-type domains span residues 90–115 and 116–145; these read IKLF…TLDN and FTVG…FIKE. C125, C128, C131, and C135 together coordinate [4Fe-4S] cluster.

[4Fe-4S] cluster serves as cofactor.

This is Ferredoxin-type protein FwdE (fwdE) from Methanocaldococcus jannaschii (strain ATCC 43067 / DSM 2661 / JAL-1 / JCM 10045 / NBRC 100440) (Methanococcus jannaschii).